The primary structure comprises 269 residues: Energy-coupling factor transporter transmembrane protein EcfT (269 aa).

The next 6 membrane-spanning stretches (helical) occupy residues 45 to 65, 75 to 95, 110 to 130, 153 to 173, 202 to 222, and 244 to 264; these read RFFLGWGVLLAFIVFLSRVSL, VLWLLVFTVLLHALFTPGEAI, MAALMGVRLVLLVAFAGLLTL, FPAHEMAMMMTIALRFIPTLL, FVPVLVPLFLIVFQRAEDLAL, and CLEDWVALGLMSVSVAGLLFL.

It belongs to the energy-coupling factor EcfT family. Forms a stable energy-coupling factor (ECF) transporter complex composed of 2 membrane-embedded substrate-binding proteins (S component), 2 ATP-binding proteins (A component) and 2 transmembrane proteins (T component). May be able to interact with more than 1 S component at a time.

The protein localises to the cell membrane. Functionally, transmembrane (T) component of an energy-coupling factor (ECF) ABC-transporter complex. Unlike classic ABC transporters this ECF transporter provides the energy necessary to transport a number of different substrates. The chain is Energy-coupling factor transporter transmembrane protein EcfT from Thermanaerovibrio acidaminovorans (strain ATCC 49978 / DSM 6589 / Su883) (Selenomonas acidaminovorans).